A 111-amino-acid chain; its full sequence is MSKGVITITDAEFESEVLKAEQPVLVYFWASWCGPCQLMSPLINLAANTYSDRLKVVKLEIDPNPTTVKKYKVEGVPALRLVKGEQILDSTEGVISKDKLLSFLDTHLNNN.

The Thioredoxin domain occupies S2–N109. C33 and C36 form a disulfide bridge.

It belongs to the thioredoxin family.

Participates in various redox reactions through the reversible oxidation of its active center dithiol to a disulfide and catalyzes dithiol-disulfide exchange reactions. This is Thioredoxin 2 (trxB) from Nostoc sp. (strain PCC 7120 / SAG 25.82 / UTEX 2576).